Consider the following 92-residue polypeptide: Small ribosomal subunit protein uS19c (92 aa).

This sequence belongs to the universal ribosomal protein uS19 family.

The protein localises to the plastid. In terms of biological role, protein S19 forms a complex with S13 that binds strongly to the 16S ribosomal RNA. The chain is Small ribosomal subunit protein uS19c from Cuscuta reflexa (Southern Asian dodder).